The following is a 3416-amino-acid chain: Genome polyprotein (3416 aa).

Positions 1 to 34 are disordered; it reads MAKGAVLKGKGGGPPRRVPKETAKKTRQGPGRLP. Residues 1–99 lie on the Cytoplasmic side of the membrane; the sequence is MAKGAVLKGK…NKRRGKRRST (99 aa). Residues 97 to 117 constitute a propeptide, ER anchor for the capsid protein C, removed in mature form by serine protease NS3; sequence RSTTGLLTPILLACLATLVFS. The helical transmembrane segment at 100-120 threads the bilayer; that stretch reads TGLLTPILLACLATLVFSATV. At 121-243 the chain is on the extracellular side; that stretch reads RRERTGNMVI…HLTRVEGWVW (123 aa). Residue N145 is glycosylated (N-linked (GlcNAc...) asparagine; by host). A helical membrane pass occupies residues 244 to 261; sequence KNKFLTAAFCAVVWMVTD. A topological domain (cytoplasmic) is located at residue S262. A helical transmembrane segment spans residues 263–281; the sequence is LPTRFIVITVALCLAPTYA. Residues 282-728 are Extracellular-facing; that stretch reads TRCTHLQNRD…HTAFGAAFNT (447 aa). Intrachain disulfides connect C284–C311, C341–C397, C341–C402, C355–C386, C373–C397, and C373–C402. Positions 379-392 are fusion peptide; it reads DRGWGNHCGLFGKG. The N-linked (GlcNAc...) asparagine; by host glycan is linked to N435. Cystine bridges form between C467–C571 and C588–C619. Residues 729 to 749 traverse the membrane as a helical segment; it reads IFGGVGFLPRILLGVALAWLG. At 750–756 the chain is on the cytoplasmic side; it reads LNSRNPT. Residues 757–777 form a helical membrane-spanning segment; that stretch reads LSVGFLITGGLVLTMTLGVGA. Topologically, residues 778-1134 are extracellular; the sequence is DMGCAIDANR…RSMVLADNGA (357 aa). Cystine bridges form between C781-C792, C832-C922, C957-C1002, C1059-C1108, C1070-C1092, and C1091-C1095. N862, N985, and N1001 each carry an N-linked (GlcNAc...) asparagine; by host glycan. The helical transmembrane segment at 1135 to 1155 threads the bilayer; that stretch reads MLSEGGVPGIVAVFVVLELVI. Over 1156-1164 the chain is Lumenal; sequence RRRPTTGSS. A helical membrane pass occupies residues 1165 to 1185; the sequence is VVWCGMVVLGLVVTGLVTIEG. Residues 1186 to 1189 are Cytoplasmic-facing; that stretch reads LCRY. A helical membrane pass occupies residues 1190 to 1210; that stretch reads VVAVGILMSMELGPEIVALVL. Residues 1211–1235 lie on the Lumenal side of the membrane; sequence LQAVFDMRTGLLVAFAVKRAYTTRE. Residues 1236-1256 traverse the membrane as a helical segment; sequence AVATYFLLLVLELGFPEASLS. Residues 1257–1295 lie on the Cytoplasmic side of the membrane; the sequence is NIWKWADSLAMGALILQACGQEGRTRVGYLLAAMMTQKD. A helical transmembrane segment spans residues 1296–1316; it reads MVIIHTGLTIFLSAATAMAVW. Topologically, residues 1317 to 1361 are lumenal; that stretch reads SMIKGQRDQKGLSWATPLAGLLGGEGVGLRLLAFRKLAERRNRRS. A helical transmembrane segment spans residues 1362-1379; it reads FSEPLTVVGVMLTVASGM. At 1380–1384 the chain is on the cytoplasmic side; that stretch reads VRHTS. Residues 1385 to 1405 form a helical membrane-spanning segment; the sequence is QEALCALVAGAFLLLMMVLGT. The Lumenal portion of the chain corresponds to 1406–1456; sequence RKMQLTAEWCGEVEWNPDLVNEGGEVNLKVRQDAMGNLHLTEVEKEERAMA. An interacts with and activates NS3 protease region spans residues 1412-1451; that stretch reads AEWCGEVEWNPDLVNEGGEVNLKVRQDAMGNLHLTEVEKE. The helical intramembrane region spans 1457 to 1477; sequence LWLLAGLVASAFHWAGILIVL. Residues 1478 to 2162 are Lumenal-facing; sequence AVWTLFEMLG…RMAERDAPEA (685 aa). The Peptidase S7 domain maps to 1492–1671; it reads SELVFSGQET…EAEKSRPEIP (180 aa). Active-site charge relay system; for serine protease NS3 activity residues include H1545, D1569, and S1629. The Helicase ATP-binding domain maps to 1677-1833; it reads TGWMSKGQIT…ESNGAIMSEE (157 aa). 1690-1697 lines the ATP pocket; that stretch reads MHPGSGKT. The DEAH box motif lies at 1781 to 1784; the sequence is DEAH. The Helicase C-terminal domain maps to 1844–2002; that stretch reads GFDWITEYEG…TLRGPVATFY (159 aa). The residue at position 1885 (K1885) is an N6-acetyllysine; by host. The chain crosses the membrane as a helical span at residues 2163 to 2183; that stretch reads FLTIVEVAVLGVATLGILWCF. The Cytoplasmic segment spans residues 2184 to 2191; sequence VARASVSR. The helical intramembrane region spans 2192–2211; the sequence is MFLGTVVLFAALFLLWIGGV. A topological domain (lumenal) is located at residue D2212. Residues 2213–2233 form a helical membrane-spanning segment; sequence YGHMAGIALIFYTLLTVLQPE. Residues 2234–2246 are Cytoplasmic-facing; it reads PGKQRSSDDNRLA. Residues 2247 to 2267 traverse the membrane as a helical segment; it reads YFLLGLFSLAGLVTANEMGML. The Lumenal segment spans residues 2268 to 2301; that stretch reads DKTKADLAGLVWRGEQRHPAWEEWTNVDIQPARS. The helical intramembrane region spans 2302–2322; the sequence is WGTYVLIVSLFTPYMLHQLQT. Over 2323–2345 the chain is Lumenal; that stretch reads KIQQLVNSSVASGAQAMRDLGGG. The segment at residues 2346–2366 is an intramembrane region (helical); it reads TPFFGVAGHVIALGVTSLVGA. The Lumenal portion of the chain corresponds to 2367–2368; the sequence is TP. A helical membrane pass occupies residues 2369-2389; that stretch reads MSLGLGVALAAFHLAIVASGL. At 2390–2432 the chain is on the cytoplasmic side; the sequence is EAELTQRAHRVFFSAMVKNPMVDGDVINPFPDGETKPALYERR. Residues 2433–2453 form a helical membrane-spanning segment; that stretch reads MSLILAIALCMGSVVLNRTAA. Residues 2454 to 2476 are Lumenal-facing; sequence SMTEAGAVGLAALGQLVHPETET. The helical transmembrane segment at 2477-2497 threads the bilayer; it reads LWTMPMACGMAGLVRGSFWGL. The Cytoplasmic portion of the chain corresponds to 2498 to 3416; the sequence is LPMGHRLWLR…WDLKLESNII (919 aa). Residues 2514 to 2778 enclose the mRNA cap 0-1 NS5-type MT domain; sequence GGAEGETLGD…EVDLGTGTRC (265 aa). S2569 serves as a coordination point for S-adenosyl-L-methionine. S2569 bears the Phosphoserine mark. K2574 acts as the For 2'-O-MTase activity in catalysis. The S-adenosyl-L-methionine site is built by G2599, W2600, T2617, I2618, D2644, and V2645. Catalysis depends on D2659, which acts as the For 2'-O-MTase activity. I2660 is a binding site for S-adenosyl-L-methionine. Catalysis depends on for 2'-O-MTase activity residues K2696 and E2732. Positions 2732 to 2736 are interaction with host SCRIB; sequence EMYFS. Y2734 contributes to the S-adenosyl-L-methionine binding site. Zn(2+) is bound by residues E2952, H2956, C2961, and C2964. Residues 3042 to 3191 enclose the RdRp catalytic domain; it reads GLFYADDTAG…RPIDDRFGKA (150 aa). Positions 3226, 3242, and 3361 each coordinate Zn(2+).

This sequence in the N-terminal section; belongs to the class I-like SAM-binding methyltransferase superfamily. mRNA cap 0-1 NS5-type methyltransferase family. In terms of assembly, homodimer. Interacts (via N-terminus) with host EXOC1 (via C-terminus); this interaction results in EXOC1 degradation through the proteasome degradation pathway. Forms heterodimers with envelope protein E in the endoplasmic reticulum and Golgi. As to quaternary structure, homodimer; in the endoplasmic reticulum and Golgi. Interacts with protein prM. Interacts with non-structural protein 1. In terms of assembly, homodimer; Homohexamer when secreted. Interacts with envelope protein E. NS1 interacts with NS4B. Interacts with host complement protein CFH; this interaction leads to the degradation of C3. Interacts (via N-terminus) with serine protease NS3. As to quaternary structure, forms a heterodimer with serine protease NS3. May form homooligomers. In terms of assembly, forms a heterodimer with NS2B. Interacts with non-structural protein 2A (via N-terminus). Interacts with NS4B. Interacts with unphosphorylated RNA-directed RNA polymerase NS5; this interaction stimulates RNA-directed RNA polymerase NS5 guanylyltransferase activity. Interacts with serine protease NS3. As to quaternary structure, homodimer. Interacts with host STAT2; this interaction inhibits the phosphorylation of the latter, and, when all viral proteins are present (polyprotein), targets STAT2 for degradation. Interacts with serine protease NS3. In terms of processing, specific enzymatic cleavages in vivo yield mature proteins. Cleavages in the lumen of endoplasmic reticulum are performed by host signal peptidase, whereas cleavages in the cytoplasmic side are performed by serine protease NS3. Signal cleavage at the 2K-4B site requires a prior NS3 protease-mediated cleavage at the 4A-2K site. Post-translationally, cleaved in post-Golgi vesicles by a host furin, releasing the mature small envelope protein M, and peptide pr. This cleavage is incomplete as up to 30% of viral particles still carry uncleaved prM. N-glycosylated. In terms of processing, N-glycosylated. The excreted form is glycosylated and this is required for efficient secretion of the protein from infected cells. Post-translationally, acetylated by host KAT5. Acetylation modulates NS3 RNA-binding and unwinding activities and plays an important positive role for viral replication. Phosphorylated on serines residues. This phosphorylation may trigger NS5 nuclear localization.

It is found in the virion. The protein resides in the host nucleus. Its subcellular location is the host cytoplasm. The protein localises to the host perinuclear region. It localises to the secreted. It is found in the virion membrane. The protein resides in the host endoplasmic reticulum membrane. It carries out the reaction Selective hydrolysis of -Xaa-Xaa-|-Yaa- bonds in which each of the Xaa can be either Arg or Lys and Yaa can be either Ser or Ala.. It catalyses the reaction RNA(n) + a ribonucleoside 5'-triphosphate = RNA(n+1) + diphosphate. The enzyme catalyses a ribonucleoside 5'-triphosphate + H2O = a ribonucleoside 5'-diphosphate + phosphate + H(+). The catalysed reaction is ATP + H2O = ADP + phosphate + H(+). It carries out the reaction a 5'-end (5'-triphosphoguanosine)-ribonucleoside in mRNA + S-adenosyl-L-methionine = a 5'-end (N(7)-methyl 5'-triphosphoguanosine)-ribonucleoside in mRNA + S-adenosyl-L-homocysteine. It catalyses the reaction a 5'-end (N(7)-methyl 5'-triphosphoguanosine)-ribonucleoside in mRNA + S-adenosyl-L-methionine = a 5'-end (N(7)-methyl 5'-triphosphoguanosine)-(2'-O-methyl-ribonucleoside) in mRNA + S-adenosyl-L-homocysteine + H(+). Functionally, plays a role in virus budding by binding to the cell membrane and gathering the viral RNA into a nucleocapsid that forms the core of a mature virus particle. During virus entry, may induce genome penetration into the host cytoplasm after hemifusion induced by the surface proteins. Can migrate to the cell nucleus where it modulates host functions. Inhibits RNA silencing by interfering with host Dicer. Its function is as follows. Prevents premature fusion activity of envelope proteins in trans-Golgi by binding to envelope protein E at pH6.0. After virion release in extracellular space, gets dissociated from E dimers. In terms of biological role, acts as a chaperone for envelope protein E during intracellular virion assembly by masking and inactivating envelope protein E fusion peptide. prM is the only viral peptide matured by host furin in the trans-Golgi network probably to avoid catastrophic activation of the viral fusion activity in acidic Golgi compartment prior to virion release. prM-E cleavage is inefficient, and many virions are only partially matured. These uncleaved prM would play a role in immune evasion. Functionally, may play a role in virus budding. Exerts cytotoxic effects by activating a mitochondrial apoptotic pathway through M ectodomain. May display a viroporin activity. Binds to host cell surface receptor and mediates fusion between viral and cellular membranes. Envelope protein is synthesized in the endoplasmic reticulum in the form of heterodimer with protein prM. They play a role in virion budding in the ER, and the newly formed immature particle is covered with 60 spikes composed of heterodimer between precursor prM and envelope protein E. The virion is transported to the Golgi apparatus where the low pH causes dissociation of PrM-E heterodimers and formation of E homodimers. prM-E cleavage is inefficient, and many virions are only partially matured. These uncleaved prM would play a role in immune evasion. Its function is as follows. Involved in immune evasion, pathogenesis and viral replication. Once cleaved off the polyprotein, is targeted to three destinations: the viral replication cycle, the plasma membrane and the extracellular compartment. Essential for viral replication. Required for formation of the replication complex and recruitment of other non-structural proteins to the ER-derived membrane structures. Excreted as a hexameric lipoparticle that plays a role against host immune response. Antagonizing the complement function. Binds to the host macrophages and dendritic cells. Inhibits signal transduction originating from Toll-like receptor 3 (TLR3). In terms of biological role, component of the viral RNA replication complex that functions in virion assembly and antagonizes the host immune response. Functionally, required cofactor for the serine protease function of NS3. May have membrane-destabilizing activity and form viroporins. Displays three enzymatic activities: serine protease, NTPase and RNA helicase. NS3 serine protease, in association with NS2B, performs its autocleavage and cleaves the polyprotein at dibasic sites in the cytoplasm: C-prM, NS2A-NS2B, NS2B-NS3, NS3-NS4A, NS4A-2K and NS4B-NS5. NS3 RNA helicase binds RNA and unwinds dsRNA in the 3' to 5' direction. Its function is as follows. Regulates the ATPase activity of the NS3 helicase activity. NS4A allows NS3 helicase to conserve energy during unwinding. In terms of biological role, functions as a signal peptide for NS4B and is required for the interferon antagonism activity of the latter. Functionally, induces the formation of ER-derived membrane vesicles where the viral replication takes place. Inhibits interferon (IFN)-induced host STAT1 phosphorylation and nuclear translocation, thereby preventing the establishment of cellular antiviral state by blocking the IFN-alpha/beta pathway. Inhibits STAT2 translocation in the nucleus after IFN-alpha treatment. Replicates the viral (+) and (-) RNA genome, and performs the capping of genomes in the cytoplasm. NS5 methylates viral RNA cap at guanine N-7 and ribose 2'-O positions. Besides its role in RNA genome replication, also prevents the establishment of cellular antiviral state by blocking the interferon-alpha/beta (IFN-alpha/beta) signaling pathway. Inhibits host TYK2 and STAT2 phosphorylation, thereby preventing activation of JAK-STAT signaling pathway. The chain is Genome polyprotein from Homo sapiens (Human).